Here is a 172-residue protein sequence, read N- to C-terminus: Peptidyl-tRNA hydrolase (172 aa).

Y10 is a binding site for tRNA. The active-site Proton acceptor is the H15. Residues F59, N61, and N101 each coordinate tRNA.

Belongs to the PTH family. Monomer.

Its subcellular location is the cytoplasm. The enzyme catalyses an N-acyl-L-alpha-aminoacyl-tRNA + H2O = an N-acyl-L-amino acid + a tRNA + H(+). Hydrolyzes ribosome-free peptidyl-tRNAs (with 1 or more amino acids incorporated), which drop off the ribosome during protein synthesis, or as a result of ribosome stalling. Functionally, catalyzes the release of premature peptidyl moieties from peptidyl-tRNA molecules trapped in stalled 50S ribosomal subunits, and thus maintains levels of free tRNAs and 50S ribosomes. The sequence is that of Peptidyl-tRNA hydrolase from Rubrobacter xylanophilus (strain DSM 9941 / JCM 11954 / NBRC 16129 / PRD-1).